The sequence spans 379 residues: Leukocyte elastase inhibitor A (379 aa).

Ser300 is subject to Phosphoserine. The tract at residues 351-379 (EFTVDHPFIFFIRHNPTSNVLFLGRVCSP) is CARD-binding motif (CBM).

It belongs to the serpin family. Ov-serpin subfamily. Monomer. Interacts (via C-terminus) with CASP1 and CASP4 (via CARD domain); these interactions regulate the activity of inflammatory caspases. Ubiquitous with higher expression in pancreas, spleen and bone marrow.

It is found in the secreted. The protein localises to the cytoplasm. Its subcellular location is the cytolytic granule. It localises to the early endosome. Its function is as follows. Neutrophil serine protease inhibitor that plays an essential role in the regulation of the innate immune response, inflammation and cellular homeostasis. Acts primarily to protect the cell from proteases released in the cytoplasm during stress or infection. These proteases are important in killing microbes but when released from granules, these potent enzymes also destroy host proteins and contribute to mortality. Regulates the activity of the neutrophil proteases elastase, cathepsin G, proteinase-3, chymase, chymotrypsin, and kallikrein-3. Also acts as a potent intracellular inhibitor of granzyme H. During inflammation, limits the activity of inflammatory caspases CASP1 and CASP4 by suppressing their caspase-recruitment domain (CARD) oligomerization and enzymatic activation. In addition, promotes the proliferation of beta-cells when secreted. The sequence is that of Leukocyte elastase inhibitor A (Serpinb1a) from Mus musculus (Mouse).